We begin with the raw amino-acid sequence, 239 residues long: 2-C-methyl-D-erythritol 4-phosphate cytidylyltransferase (239 aa).

This sequence belongs to the IspD/TarI cytidylyltransferase family. IspD subfamily. In terms of assembly, homodimer.

It catalyses the reaction 2-C-methyl-D-erythritol 4-phosphate + CTP + H(+) = 4-CDP-2-C-methyl-D-erythritol + diphosphate. The protein operates within isoprenoid biosynthesis; isopentenyl diphosphate biosynthesis via DXP pathway; isopentenyl diphosphate from 1-deoxy-D-xylulose 5-phosphate: step 2/6. In terms of biological role, catalyzes the formation of 4-diphosphocytidyl-2-C-methyl-D-erythritol from CTP and 2-C-methyl-D-erythritol 4-phosphate (MEP). This is 2-C-methyl-D-erythritol 4-phosphate cytidylyltransferase from Sodalis glossinidius (strain morsitans).